We begin with the raw amino-acid sequence, 204 residues long: Crossover junction endodeoxyribonuclease RuvC (204 aa).

Residues Asp7, Glu68, and Asp141 contribute to the active site. Asp7, Glu68, and Asp141 together coordinate Mg(2+).

It belongs to the RuvC family. As to quaternary structure, homodimer which binds Holliday junction (HJ) DNA. The HJ becomes 2-fold symmetrical on binding to RuvC with unstacked arms; it has a different conformation from HJ DNA in complex with RuvA. In the full resolvosome a probable DNA-RuvA(4)-RuvB(12)-RuvC(2) complex forms which resolves the HJ. It depends on Mg(2+) as a cofactor.

Its subcellular location is the cytoplasm. It carries out the reaction Endonucleolytic cleavage at a junction such as a reciprocal single-stranded crossover between two homologous DNA duplexes (Holliday junction).. Functionally, the RuvA-RuvB-RuvC complex processes Holliday junction (HJ) DNA during genetic recombination and DNA repair. Endonuclease that resolves HJ intermediates. Cleaves cruciform DNA by making single-stranded nicks across the HJ at symmetrical positions within the homologous arms, yielding a 5'-phosphate and a 3'-hydroxyl group; requires a central core of homology in the junction. The consensus cleavage sequence is 5'-(A/T)TT(C/G)-3'. Cleavage occurs on the 3'-side of the TT dinucleotide at the point of strand exchange. HJ branch migration catalyzed by RuvA-RuvB allows RuvC to scan DNA until it finds its consensus sequence, where it cleaves and resolves the cruciform DNA. In Clavibacter sepedonicus (Clavibacter michiganensis subsp. sepedonicus), this protein is Crossover junction endodeoxyribonuclease RuvC.